A 254-amino-acid chain; its full sequence is Floral homeotic protein APETALA 1 (254 aa).

Positions 3–57 (RGRVQLKRIENKINRQVTFSKRRAGLLKKAHEISVLCDAEVALVVFSHKGKLFEY) constitute an MADS-box domain. The K-box domain maps to 88–178 (NTNWSMEYNR…SKQIKEREKI (91 aa)).

It is found in the nucleus. In terms of biological role, controls floral meristem identity. Is also required for normal development of sepals and petals. Is required for the transition of an influorescence meristem into a floral meristem. Interacts with LEAFY. This chain is Floral homeotic protein APETALA 1 (AP1), found in Sinapis alba (White mustard).